Reading from the N-terminus, the 394-residue chain is MAMPYASLSPAVADHRSSPAAATASLLPFCRSTPLSAGGGGVAMGEDAPMTARWPPAAAARLPPFTAAQYEELEQQALIYKYLVAGVPVPPDLVLPIRRGLDSLAARFYNHPALGYGPYFGKKLDPEPGRCRRTDGKKWRCSKEAAPDSKYCERHMHRGRNRSRKPVETQLVAQSQPPSSVVGSAAAPLAAASNGSSFQNHSLYPAIAGSNGGGGGRNMPSSFGSALGSQLHMDNAAPYAAVGGGTGKDLRYTAYGTRSLADEQSQLITEAINTSIENPWRLLPSQNSPFPLSSYSQLGALSDLGQNTPSSLSKVQRQPLSFFGNDYAAVDSVKQENQTLRPFFDEWPKGRDSWSDLADENANLSSFSGTQLSISIPMASSDFSAASSRSTNGD.

Residues Pro-64–Arg-99 enclose the QLQ domain. The region spanning Asp-125–Thr-169 is the WRC domain. 2 short sequence motifs (bipartite nuclear localization signal) span residues Arg-130–Arg-140 and Arg-158–Lys-165. Residues Met-156 to Ser-180 are disordered. Low complexity predominate over residues Gln-170–Ser-180.

It belongs to the GRF family. Interacts with GIF1. Interacts with GSK2. In terms of tissue distribution, expressed in stems. Expressed in panicles.

It is found in the nucleus. Its activity is regulated as follows. Transactivation activity is repressed by GSK2. Transcription activator that plays a role in the regulation of meristematic function in leaves, stems and inflorescences. Transcription activator that plays a regulatory role in grain development. Positively regulates grain size by promoting cell division and expansion, leading to increased grain length and width. Positively regulates the expression of genes promoting cell proliferation. Activates the expression of expansin genes to promote cell expansion and grain size. May promote grain size by activating brassinosteroid responses. Component of a network formed by the microRNA396 (miRNA396), the GRFs and their interacting factors (GIFs) acting in the regulation of meristem function, at least partially through the control of cell proliferation. Component of the miRNA396c-GRF4-GIF1 regulatory module that plays an important role in grain size determination. The chain is Growth-regulating factor 4 from Oryza sativa subsp. japonica (Rice).